Consider the following 552-residue polypeptide: Dihydroxy-acid dehydratase (552 aa).

Position 78 (Asp78) interacts with Mg(2+). Cys119 is a [2Fe-2S] cluster binding site. 2 residues coordinate Mg(2+): Asp120 and Lys121. Lys121 is subject to N6-carboxylysine. Cys190 is a [2Fe-2S] cluster binding site. Glu441 lines the Mg(2+) pocket. Ser467 functions as the Proton acceptor in the catalytic mechanism.

The protein belongs to the IlvD/Edd family. Homodimer. [2Fe-2S] cluster is required as a cofactor. Mg(2+) serves as cofactor.

It catalyses the reaction (2R)-2,3-dihydroxy-3-methylbutanoate = 3-methyl-2-oxobutanoate + H2O. The catalysed reaction is (2R,3R)-2,3-dihydroxy-3-methylpentanoate = (S)-3-methyl-2-oxopentanoate + H2O. Its pathway is amino-acid biosynthesis; L-isoleucine biosynthesis; L-isoleucine from 2-oxobutanoate: step 3/4. It participates in amino-acid biosynthesis; L-valine biosynthesis; L-valine from pyruvate: step 3/4. Functionally, functions in the biosynthesis of branched-chain amino acids. Catalyzes the dehydration of (2R,3R)-2,3-dihydroxy-3-methylpentanoate (2,3-dihydroxy-3-methylvalerate) into 2-oxo-3-methylpentanoate (2-oxo-3-methylvalerate) and of (2R)-2,3-dihydroxy-3-methylbutanoate (2,3-dihydroxyisovalerate) into 2-oxo-3-methylbutanoate (2-oxoisovalerate), the penultimate precursor to L-isoleucine and L-valine, respectively. The polypeptide is Dihydroxy-acid dehydratase (Ignicoccus hospitalis (strain KIN4/I / DSM 18386 / JCM 14125)).